Consider the following 477-residue polypeptide: Ribulose bisphosphate carboxylase large chain (477 aa).

The propeptide occupies 1 to 2 (MS). Pro-3 is modified (N-acetylproline). At Lys-14 the chain carries N6,N6,N6-trimethyllysine. Positions 123 and 173 each coordinate substrate. Lys-175 (proton acceptor) is an active-site residue. Lys-177 lines the substrate pocket. Residues Lys-201, Asp-203, and Glu-204 each contribute to the Mg(2+) site. Lys-201 is modified (N6-carboxylysine). His-294 (proton acceptor) is an active-site residue. Residues Arg-295, His-327, and Ser-379 each coordinate substrate.

The protein belongs to the RuBisCO large chain family. Type I subfamily. In terms of assembly, heterohexadecamer of 8 large chains and 8 small chains; disulfide-linked. The disulfide link is formed within the large subunit homodimers. It depends on Mg(2+) as a cofactor. In terms of processing, the disulfide bond which can form in the large chain dimeric partners within the hexadecamer appears to be associated with oxidative stress and protein turnover.

The protein resides in the plastid. The catalysed reaction is 2 (2R)-3-phosphoglycerate + 2 H(+) = D-ribulose 1,5-bisphosphate + CO2 + H2O. It carries out the reaction D-ribulose 1,5-bisphosphate + O2 = 2-phosphoglycolate + (2R)-3-phosphoglycerate + 2 H(+). In terms of biological role, ruBisCO catalyzes two reactions: the carboxylation of D-ribulose 1,5-bisphosphate, the primary event in carbon dioxide fixation, as well as the oxidative fragmentation of the pentose substrate in the photorespiration process. Both reactions occur simultaneously and in competition at the same active site. The protein is Ribulose bisphosphate carboxylase large chain (rbcL) of Lathraea clandestina (Purple toothwort).